We begin with the raw amino-acid sequence, 364 residues long: Anhydro-N-acetylmuramic acid kinase (364 aa).

11-18 lines the ATP pocket; that stretch reads GSSLDGID.

Belongs to the anhydro-N-acetylmuramic acid kinase family.

It catalyses the reaction 1,6-anhydro-N-acetyl-beta-muramate + ATP + H2O = N-acetyl-D-muramate 6-phosphate + ADP + H(+). It functions in the pathway amino-sugar metabolism; 1,6-anhydro-N-acetylmuramate degradation. The protein operates within cell wall biogenesis; peptidoglycan recycling. Functionally, catalyzes the specific phosphorylation of 1,6-anhydro-N-acetylmuramic acid (anhMurNAc) with the simultaneous cleavage of the 1,6-anhydro ring, generating MurNAc-6-P. Is required for the utilization of anhMurNAc either imported from the medium or derived from its own cell wall murein, and thus plays a role in cell wall recycling. The protein is Anhydro-N-acetylmuramic acid kinase of Pseudomonas syringae pv. syringae (strain B728a).